Reading from the N-terminus, the 544-residue chain is MAKEILFSDNARNRLYSGVEKLADAVKVTMGPRGRNVLLQKSFGAPTITKDGVSVAREIELKDTLENMGAQLVKEVASKTNDEAGDGTTTATVLAHSIFKEGLRNVTAGANPISLKRGMDKACEAILAELKKSSKVVANKTEIEQVATISANSDSAIGKMIAEAMDKVGKDGVITVEEAKGISDELDVVEGMQFDRGYLSPYFVTNPEKMIAEFNNPFILLYDKKISSLKEMLPILESVNQSGRPLVIIAEDVDGEALATLVVNRLRGSLHIAAVKAPGFGDRRKAMLEDIAVLTGGTVISEEMGMKLETAEFSCLGTASKIVIDKDNTTIVDGNGDNERVVARVNQIKAEISNTTSDYDREKLQERLAKLSGGVAVIKVGAATETEMKEKKDRVDDALSATRAAVEEGIVIGGGAALIKASKKVNLDLTGDERIGADIVLRAISAPLKQIAINAGFDAGVVANEVEKSSNENLGFNAATGEYVDMFEAGIVDPAKVERVAMQNAVSVASLLLTTEATVSDIKEDKPAMPSMPDMGGMGMPGMM.

ATP-binding positions include 29–32, Lys50, 86–90, Gly414, 477–479, and Asp493; these read TMGP, DGTTT, and NAA. Residues 525 to 544 are disordered; sequence DKPAMPSMPDMGGMGMPGMM.

The protein belongs to the chaperonin (HSP60) family. Forms a cylinder of 14 subunits composed of two heptameric rings stacked back-to-back. Interacts with the co-chaperonin GroES.

The protein resides in the cytoplasm. The enzyme catalyses ATP + H2O + a folded polypeptide = ADP + phosphate + an unfolded polypeptide.. Its function is as follows. Together with its co-chaperonin GroES, plays an essential role in assisting protein folding. The GroEL-GroES system forms a nano-cage that allows encapsulation of the non-native substrate proteins and provides a physical environment optimized to promote and accelerate protein folding. The polypeptide is Chaperonin GroEL (Aliarcobacter butzleri (strain RM4018) (Arcobacter butzleri)).